We begin with the raw amino-acid sequence, 362 residues long: Microfibril-associated glycoprotein 3 (362 aa).

The first 18 residues, 1–18 (MKLHCCLFTLVASIIVPA), serve as a signal peptide directing secretion. The Extracellular portion of the chain corresponds to 19–147 (AFVLEDVDFD…LRVIFTSGDM (129 aa)). N-linked (GlcNAc...) asparagine glycans are attached at residues N36, N41, and N110. The Ig-like C2-type domain maps to 45 to 137 (PSSFELSASS…SPIRASYSVT (93 aa)). A disulfide bridge connects residues C73 and C124. A helical membrane pass occupies residues 148–170 (SVYYMIVCLIAFTITLILNVTRL). At 171 to 362 (CMMSSHLRKT…KDGAYENCQL (192 aa)) the chain is on the cytoplasmic side. Disordered stretches follow at residues 285 to 306 (VINP…GSLN) and 323 to 350 (ETKS…ESNC). Polar residues predominate over residues 323-337 (ETKSIDTESQGSSHF).

In terms of processing, glycosylated.

It localises to the cell membrane. Functionally, component of the elastin-associated microfibrils. In Homo sapiens (Human), this protein is Microfibril-associated glycoprotein 3 (MFAP3).